Here is a 756-residue protein sequence, read N- to C-terminus: 1-phosphatidylinositol 4,5-bisphosphate phosphodiesterase delta-1 (756 aa).

Residues 21–130 (ALLKGSQLLK…WVQGLRKIIH (110 aa)) enclose the PH domain. A substrate binding region spans residues 30–57 (KVKSSSWRRERFYKLQEDCKTIWQESRK). 2 consecutive EF-hand domains span residues 140–175 (KLQH…LNIQ) and 176–211 (VDDG…LTQR). The Ca(2+) site is built by Asp153, Asn155, Asp157, Lys159, Glu164, Asp189, Ser191, Thr193, Ser195, and Glu200. Residue Ser191 is glycosylated (O-linked (GlcNAc) serine). O-linked (GlcNAc) threonine glycosylation is present at Thr193. The PI-PLC X-box domain maps to 296–440 (QDMDQPLSHY…LKGKILLKGK (145 aa)). His311 is an active-site residue. Ca(2+)-binding residues include Asn312, Glu341, and Asp343. Residue His356 is part of the active site. Ca(2+) is bound at residue Glu390. Positions 438 and 440 each coordinate substrate. Residue Thr457 is modified to Phosphothreonine. Ser460 is modified (phosphoserine). The 118-residue stretch at 492–609 (LSDMIIYCKS…GYVLKPAFLR (118 aa)) folds into the PI-PLC Y-box domain. 2 residues coordinate substrate: Ser522 and Arg549. Residues 609 to 737 (RDPNTTFNSR…QGYRHVHLLS (129 aa)) enclose the C2 domain. Ile651, Asp653, Asn677, Asp706, Tyr707, and Asp708 together coordinate Ca(2+).

Interacts with TGM2. Ca(2+) serves as cofactor.

It catalyses the reaction a 1,2-diacyl-sn-glycero-3-phospho-(1D-myo-inositol-4,5-bisphosphate) + H2O = 1D-myo-inositol 1,4,5-trisphosphate + a 1,2-diacyl-sn-glycerol + H(+). It carries out the reaction a 1,2-diacyl-sn-glycero-3-phospho-(1D-myo-inositol) + H2O = 1D-myo-inositol 1-phosphate + a 1,2-diacyl-sn-glycerol + H(+). The production of the second messenger molecules diacylglycerol (DAG) and inositol 1,4,5-trisphosphate (IP3) is mediated by activated phosphatidylinositol-specific phospholipase C enzymes. Essential for trophoblast and placental development. Binds phosphatidylinositol 4,5-bisphosphate. This chain is 1-phosphatidylinositol 4,5-bisphosphate phosphodiesterase delta-1, found in Rattus norvegicus (Rat).